The following is a 508-amino-acid chain: Cell division protein FtsZ (508 aa).

Residues 24-28 (GAGGN), 111-113 (GTG), E142, R146, and D190 contribute to the GTP site. Disordered regions lie at residues 342-389 (IAET…SAPQ) and 428-508 (VAEE…RLAN). The span at 464-482 (QQASAPQAQARSAQSARPQ) shows a compositional bias: low complexity.

The protein belongs to the FtsZ family. In terms of assembly, homodimer. Polymerizes to form a dynamic ring structure in a strictly GTP-dependent manner. Interacts directly with several other division proteins.

It is found in the cytoplasm. Essential cell division protein that forms a contractile ring structure (Z ring) at the future cell division site. The regulation of the ring assembly controls the timing and the location of cell division. One of the functions of the FtsZ ring is to recruit other cell division proteins to the septum to produce a new cell wall between the dividing cells. Binds GTP and shows GTPase activity. The polypeptide is Cell division protein FtsZ (Caulobacter vibrioides (strain ATCC 19089 / CIP 103742 / CB 15) (Caulobacter crescentus)).